The sequence spans 312 residues: Olfactory receptor 4F15 (312 aa).

Over 1–25 the chain is Extracellular; it reads MNGMNHSVVSEFVFMGLTNSREIQL. Residue Asn5 is glycosylated (N-linked (GlcNAc...) asparagine). A helical transmembrane segment spans residues 26–49; sequence LLFVFSLLFYFASMMGNLVIVFTV. Over 50–57 the chain is Cytoplasmic; the sequence is TMDAHLHS. Residues 58-79 traverse the membrane as a helical segment; sequence PMYFLLANLSIIDMAFCSITAP. Topologically, residues 80–100 are extracellular; sequence KMICDIFKKHKAISFRGCITQ. The cysteines at positions 97 and 189 are disulfide-linked. The helical transmembrane segment at 101–120 threads the bilayer; sequence IFFSHALGGTEMVLLIAMAF. The Cytoplasmic portion of the chain corresponds to 121 to 139; it reads DRYMAICKPLHYLTIMSPR. Residues 140 to 158 traverse the membrane as a helical segment; that stretch reads MCLYFLATSSIIGLIHSLV. The Extracellular portion of the chain corresponds to 159–195; it reads QLVFVVDLPFCGPNIFDSFYCDLPRLLRLACTNTQEL. A helical transmembrane segment spans residues 196 to 219; sequence EFMVTVNSGLISVGSFVLLVISYI. At 220 to 235 the chain is on the cytoplasmic side; the sequence is FILFTVWKHSSGGLAK. A helical membrane pass occupies residues 236-258; sequence ALSTLSAHVTVVILFFGPLMFFY. Residues 259-269 are Extracellular-facing; sequence TWPSPTSHLDK. A helical transmembrane segment spans residues 270–289; it reads YLAIFDAFITPFLNPVIYTF. The Cytoplasmic segment spans residues 290–312; it reads RNKDMKVAMRRLCSRLAHFTKIL.

It belongs to the G-protein coupled receptor 1 family.

The protein resides in the cell membrane. Its function is as follows. Odorant receptor. In Homo sapiens (Human), this protein is Olfactory receptor 4F15 (OR4F15).